Reading from the N-terminus, the 186-residue chain is TATA box-binding protein-like 1 (186 aa).

It belongs to the TBP family.

Its subcellular location is the cytoplasm. It localises to the nucleus. In terms of biological role, part of a specialized transcription system that mediates the transcription of most ribosomal proteins through the 5'-TCT-3' motif which is a core promoter element at these genes. Seems to also mediate the transcription of NF1. Does not bind the TATA box. Members of the TBP family are differentially required to regulate transcription and development during early embryogenesis. The protein is TATA box-binding protein-like 1 of Danio rerio (Zebrafish).